A 77-amino-acid polypeptide reads, in one-letter code: U11-lycotoxin-Ls1a (77 aa).

A signal peptide spans 1–20 (MKLIILTGLVLFAIVSFIEA). The propeptide occupies 21 to 26 (EEETGR).

The protein belongs to the neurotoxin 19 (CSTX) family. 10 (U11-Lctx) subfamily. Post-translationally, contains 4 disulfide bonds. As to expression, expressed by the venom gland.

The protein localises to the secreted. The sequence is that of U11-lycotoxin-Ls1a from Lycosa singoriensis (Wolf spider).